The sequence spans 248 residues: Probable transcriptional regulatory protein RHE_CH03475 (248 aa).

It belongs to the TACO1 family.

Its subcellular location is the cytoplasm. The protein is Probable transcriptional regulatory protein RHE_CH03475 of Rhizobium etli (strain ATCC 51251 / DSM 11541 / JCM 21823 / NBRC 15573 / CFN 42).